The sequence spans 172 residues: Putative phosphoesterase BcerKBAB4_1135 (172 aa).

Catalysis depends on histidine 34, which acts as the Proton donor. 2 consecutive short sequence motifs (HXTX) follow at residues 34–37 and 115–118; these read HITL and HLTI. The active-site Proton acceptor is the histidine 115.

Belongs to the 2H phosphoesterase superfamily. YjcG family.

This chain is Putative phosphoesterase BcerKBAB4_1135, found in Bacillus mycoides (strain KBAB4) (Bacillus weihenstephanensis).